Reading from the N-terminus, the 436-residue chain is Methylenetetrahydrofolate--tRNA-(uracil-5-)-methyltransferase TrmFO (436 aa).

8–13 (GAGLAG) contacts FAD.

This sequence belongs to the MnmG family. TrmFO subfamily. FAD serves as cofactor.

It is found in the cytoplasm. It carries out the reaction uridine(54) in tRNA + (6R)-5,10-methylene-5,6,7,8-tetrahydrofolate + NADH + H(+) = 5-methyluridine(54) in tRNA + (6S)-5,6,7,8-tetrahydrofolate + NAD(+). The enzyme catalyses uridine(54) in tRNA + (6R)-5,10-methylene-5,6,7,8-tetrahydrofolate + NADPH + H(+) = 5-methyluridine(54) in tRNA + (6S)-5,6,7,8-tetrahydrofolate + NADP(+). In terms of biological role, catalyzes the folate-dependent formation of 5-methyl-uridine at position 54 (M-5-U54) in all tRNAs. In Persephonella marina (strain DSM 14350 / EX-H1), this protein is Methylenetetrahydrofolate--tRNA-(uracil-5-)-methyltransferase TrmFO.